A 707-amino-acid chain; its full sequence is Potassium-transporting ATPase ATP-binding subunit (707 aa).

Basic and acidic residues predominate over residues 1–11 (MNTDTQKHEDA). The tract at residues 1–37 (MNTDTQKHEDAMSTTTPARAPHDDAPSGQQPGQGRVG) is disordered. The next 4 helical transmembrane spans lie at 61–81 (VMAK…TTAF), 89–109 (WFGW…NLAE), 238–258 (IALN…CATL), and 271–291 (MIVL…ALLS). The 4-aspartylphosphate intermediate role is filled by D326. ATP contacts are provided by residues D363, E367, 397–404 (FTAQTRMS), and K415. Mg(2+) contacts are provided by D542 and D546. Transmembrane regions (helical) follow at residues 612 to 632 (FAII…LNIM), 640 to 660 (AILS…PLAL), and 683 to 703 (LGGL…VSLI).

Belongs to the cation transport ATPase (P-type) (TC 3.A.3) family. Type IA subfamily. The system is composed of three essential subunits: KdpA, KdpB and KdpC.

The protein resides in the cell membrane. The catalysed reaction is K(+)(out) + ATP + H2O = K(+)(in) + ADP + phosphate + H(+). Its function is as follows. Part of the high-affinity ATP-driven potassium transport (or Kdp) system, which catalyzes the hydrolysis of ATP coupled with the electrogenic transport of potassium into the cytoplasm. This subunit is responsible for energy coupling to the transport system and for the release of the potassium ions to the cytoplasm. The protein is Potassium-transporting ATPase ATP-binding subunit of Streptomyces coelicolor (strain ATCC BAA-471 / A3(2) / M145).